The primary structure comprises 385 residues: Chaperone protein DnaJ (385 aa).

Positions 5 to 70 (DYYEVLGVSK…DKKAAYDRFG (66 aa)) constitute a J domain. The segment at 143-221 (GLSKQITVPS…CGGAGRQEKD (79 aa)) adopts a CR-type zinc-finger fold. The Zn(2+) site is built by Cys-156, Cys-159, Cys-173, Cys-176, Cys-195, Cys-198, Cys-209, and Cys-212. CXXCXGXG motif repeat units follow at residues 156 to 163 (CSSCDGTG), 173 to 180 (CPTCSGMG), 195 to 202 (CPTCNGMG), and 209 to 216 (CRTCGGAG). The tract at residues 299-323 (GGRSRVRVPEGSQSGRQMRLRGKGM) is disordered.

It belongs to the DnaJ family. In terms of assembly, homodimer. It depends on Zn(2+) as a cofactor.

Its subcellular location is the cytoplasm. Its function is as follows. Participates actively in the response to hyperosmotic and heat shock by preventing the aggregation of stress-denatured proteins and by disaggregating proteins, also in an autonomous, DnaK-independent fashion. Unfolded proteins bind initially to DnaJ; upon interaction with the DnaJ-bound protein, DnaK hydrolyzes its bound ATP, resulting in the formation of a stable complex. GrpE releases ADP from DnaK; ATP binding to DnaK triggers the release of the substrate protein, thus completing the reaction cycle. Several rounds of ATP-dependent interactions between DnaJ, DnaK and GrpE are required for fully efficient folding. Also involved, together with DnaK and GrpE, in the DNA replication of plasmids through activation of initiation proteins. In Jannaschia sp. (strain CCS1), this protein is Chaperone protein DnaJ.